A 440-amino-acid polypeptide reads, in one-letter code: Tyrosine--tRNA ligase (440 aa).

Y46 serves as a coordination point for L-tyrosine. The short motif at 51 to 60 (PTAASLHIGN) is the 'HIGH' region element. 2 residues coordinate L-tyrosine: Y181 and Q185. The 'KMSKS' region signature appears at 241-245 (KFGKS). K244 is an ATP binding site. The S4 RNA-binding domain maps to 373-439 (DRVIDAAQAA…GKKALGAVEN (67 aa)).

Belongs to the class-I aminoacyl-tRNA synthetase family. TyrS type 1 subfamily. As to quaternary structure, homodimer.

It localises to the cytoplasm. It carries out the reaction tRNA(Tyr) + L-tyrosine + ATP = L-tyrosyl-tRNA(Tyr) + AMP + diphosphate + H(+). Its function is as follows. Catalyzes the attachment of tyrosine to tRNA(Tyr) in a two-step reaction: tyrosine is first activated by ATP to form Tyr-AMP and then transferred to the acceptor end of tRNA(Tyr). The polypeptide is Tyrosine--tRNA ligase (Bifidobacterium longum (strain NCC 2705)).